The sequence spans 492 residues: Cysteine--tRNA ligase (492 aa).

Residue cysteine 27 participates in Zn(2+) binding. Residues 29–39 carry the 'HIGH' region motif; sequence VTVYDLCHLGH. Positions 211, 236, and 240 each coordinate Zn(2+). Positions 268 to 272 match the 'KMSKS' region motif; the sequence is KMSKS. Residue lysine 271 participates in ATP binding.

The protein belongs to the class-I aminoacyl-tRNA synthetase family. Monomer. Requires Zn(2+) as cofactor.

It is found in the cytoplasm. The catalysed reaction is tRNA(Cys) + L-cysteine + ATP = L-cysteinyl-tRNA(Cys) + AMP + diphosphate. This Prochlorococcus marinus subsp. pastoris (strain CCMP1986 / NIES-2087 / MED4) protein is Cysteine--tRNA ligase.